A 2130-amino-acid chain; its full sequence is MSASFTDDKILRKSSVVEGGEISEELKILEKEPEHEPSEVVIGNDDDVKDDVKDDVKDDVKDDVKDDVKDDLKDDVEDDTIAPNQFEEAIKKNKLDPQDQTAAGDSGRSQPDLSPRTTTGVVKPSSFETKDTDGHDSAEVVSGSATQDDDNRNMDHDPITLVGDKRKSELQEYIPQTEADKEETKDFDPAQEDLTSADKAGKDQTPKVSDASEAKIDSLPWGPETSTDAKLPWETEDTNSDNKTADPIPWEQGSSDEASKNDDNLPWESNKNDAPSSQADNDKLPWESDINDAPSSQAGDDNLPWDSNTNDAPSSQAGDGNLPWDSNTNDAPSSQAEDDKLPWESDINNDVPASQEDPENKESNDSTNVDDLFGGSHNIDFLKEIQKQEESKDTDEVLLDSSENTPSAQPSSQDQDTSQDMRNYSTTQTDISHSEENKLALQSKNVPKGENEKTTENSDIHRPQDTDHFDDLFQNDDHDFLQEVGSSDNKSDPFKFPPDNSAPENKDSDKFETQNKSLDFLEMDDDLLDDEFLEDDTTSQTQTLKSKSNKQTYLPSTTNPSTTPVVPTQEKPKGSAMNKKKNDAYDFPDSLIAHKFKPAARSTNKYAPGSSNHNSPPVASMPPKLHSPSMNAVGSVPVPNEKQATMSQPLSAAVSTQGLQKKSFFEDLPIPVQKQPVKPARAALPRSQMSQSISPTVNPAQPQLQKPVVNPYAKPAMNTVVSPPMNYAQPPGMPQVTNNRGGSHLPAGMVAPPPPSQITGNNNVLPHAQPQPFPNMQNQNLGQNTNSYAPSRKISNPSPNLINTALPKVQGAQSATSPYVPNAGPYAPSSHKRTSSRASSLIGAKSKEVNPYAPASINVPNAQQGISHGIMMPNTASPTAPPAVMNNSIHGRRRGVSNVKSNFYHKEQTAPKVENPNALLQRQFPIFNWSSSKNIAYLIPSAVTNTYNRTSESVNVTDIKYVLKDSHYLSTFPGPFNKLKTKKKDVEKWLESYNEFLIQNNTGMKQDEVLVSQILLALVRFNGDCKSDDFTKAACAVLNPSVDYANDNTHMDMNPISTLANAYRLDNTGINIIWSLLQIGNTEKALEFCLSKGDWALGLMIARFEGPEKFGKVASDYARTTFPFQKSQSKVHHLMPIMLKLFAGNFKSAIDDITNVQAEGEWFIQNWRELVSLVVINKPQHGHEFLCEFSKLLALSGQIIASQICLILAGLPLSSIPSQANGILFSVIGFGSHSFAYSETYEYAMQLSTTNIPPTGFAHLLPLKLKHAQVLADYGLFTESQKYCDAISSIIKATGRSSFFNPVAFQEFQNLLMRISQSGASDSGWFGSKKLTLDKMWDQLDKFIGGDESKAKSGENGTFSKFSPAVSRAPSSLDITSLNNHYPQTSPQVRPDHIRDPLVTTNSAPGTSSENSVLKSNGMSHSRPPPSLYSNNSTTSIQKYAPSSSQVTPKPTLTRNDQSFSSQQQVGNPVYESLQQSRMAPNNSSSQYLPMNQGQSENIKAPSKYSANPQKVYSNNNGSLPYMNPSAQFSSSSIASHQSLHMGISGVNANPLTSVKRPSISNSFSESHVNSNPISGHKHTSSLQSDISLDYPSEFKSMPKPASDNPIAPDTHSSLKRDTENVPETITESRESEKSSELRDSSNSLTMPSEEGHSTVEDSTLPQAPPPKGHSKPNIASSSVAPKKARARANPYAPGAVASRSGGNNKYGPQSSDKYTSKKENTSMLVDTPSDISYNDIFNYGGYKVPKKTEINDTETLHDRNEVKEAPNQESIDTKEEASKTNSYIYPEPPKVASTSQSRNINVDESFDGENINDHDFETSSLHTPNANVPASNLNNSFRTNEKESMFHPYQEGENKSRRTSNFGVDSSFGDFPIPGSPDLTTRANSVIGGPGGLFSSRLSQSQQSALYQQYEVQDDTVKEYIPVVDEEEDEDSEDESSKKEKRKKEEQERQARIEADRAKQRQDAVASQRNQTWWPGFLARKNDDKPKAIRAKLGEKNKFVYDEKLKRWIDKSIPLEEQLKSSAPPPPPAAKKKPTEGSSSSISKPSSSSTPLGPAKQDMAPPASNSSNSAPSLGPSQSRPSQSGPPPPAGPSLANAGLDDLLSLGGGPSSGRKTKKGPRRGYVNLLDQK.

Basic and acidic residues-rich tracts occupy residues 27-38 (KILEKEPEHEPS), 50-72 (DDVKDDVKDDVKDDVKDDVKDDL), and 88-97 (EAIKKNKLDP). 9 disordered regions span residues 27-516 (KILE…TQNK), 532-585 (FLED…NDAY), 598-647 (PAAR…ATMS), 810-842 (QGAQSATSPYVPNAGPYAPSSHKRTSSRASSLI), 1347-1366 (DESKAKSGENGTFSKFSPAV), 1374-1519 (DITS…NNGS), 1558-1731 (PSIS…TPSD), 1753-1997 (DTET…LGEK), and 2014-2130 (IPLE…LDQK). The segment covering 98–120 (QDQTAAGDSGRSQPDLSPRTTTG) has biased composition (polar residues). Composition is skewed to basic and acidic residues over residues 128–138 (ETKDTDGHDSA), 149–170 (DDNRNMDHDPITLVGDKRKSEL), 178–188 (EADKEETKDFD), and 199–216 (KAGKDQTPKVSDASEAKI). 2 stretches are compositionally biased toward polar residues: residues 267–279 (WESNKNDAPSSQA) and 293–335 (APSS…PSSQ). The segment covering 380-395 (DFLKEIQKQEESKDTD) has biased composition (basic and acidic residues). Positions 405–420 (TPSAQPSSQDQDTSQD) are enriched in low complexity. Positions 421-431 (MRNYSTTQTDI) are enriched in polar residues. 2 stretches are compositionally biased toward basic and acidic residues: residues 447–481 (PKGENEKTTENSDIHRPQDTDHFDDLFQNDDHDFL) and 504–513 (ENKDSDKFET). Residues 538–568 (TSQTQTLKSKSNKQTYLPSTTNPSTTPVVPT) are compositionally biased toward low complexity. Over residues 601 to 617 (RSTNKYAPGSSNHNSPP) the composition is skewed to polar residues. 5 stretches are compositionally biased toward polar residues: residues 1374-1388 (DITSLNNHYPQTSPQ), 1399-1420 (VTTNSAPGTSSENSVLKSNGMS), 1428-1498 (LYSN…QSEN), 1505-1519 (YSANPQKVYSNNNGS), and 1559-1574 (SISNSFSESHVNSNPI). The segment covering 1627 to 1640 (TESRESEKSSELRD) has biased composition (basic and acidic residues). Composition is skewed to polar residues over residues 1701–1714 (SGGNNKYGPQSSDK) and 1722–1731 (TSMLVDTPSD). Basic and acidic residues predominate over residues 1753–1779 (DTETLHDRNEVKEAPNQESIDTKEEAS). 2 stretches are compositionally biased toward polar residues: residues 1793–1803 (ASTSQSRNINV) and 1819–1839 (TSSLHTPNANVPASNLNNSFR). Over residues 1840–1857 (TNEKESMFHPYQEGENKS) the composition is skewed to basic and acidic residues. Residues 1896 to 1911 (SSRLSQSQQSALYQQY) are compositionally biased toward low complexity. The span at 1925-1935 (VDEEEDEDSED) shows a compositional bias: acidic residues. 2 stretches are compositionally biased toward basic and acidic residues: residues 1936–1963 (ESSKKEKRKKEEQERQARIEADRAKQRQ) and 1981–1997 (RKNDDKPKAIRAKLGEK). 3 stretches are compositionally biased toward low complexity: residues 2039–2050 (SSSSISKPSSSS), 2061–2083 (APPASNSSNSAPSLGPSQSRPSQ), and 2092–2104 (PSLANAGLDDLLS).

The protein belongs to the SEC16 family.

It localises to the endoplasmic reticulum membrane. Functionally, involved in the initiation of assembly of the COPII coat required for the formation of transport vesicles from the endoplasmic reticulum (ER) and the selection of cargo molecules. Also involved in autophagy. The sequence is that of COPII coat assembly protein SEC16 (SEC16) from Debaryomyces hansenii (strain ATCC 36239 / CBS 767 / BCRC 21394 / JCM 1990 / NBRC 0083 / IGC 2968) (Yeast).